A 274-amino-acid polypeptide reads, in one-letter code: Protein STAY-GREEN, chloroplastic (274 aa).

A chloroplast-targeting transit peptide spans 1-48 (MAAATSTMSLIPPITQQQRWHAADSLVVLASRRHDSRRRRRCRYVVPR).

This sequence belongs to the staygreen family.

It localises to the plastid. The protein resides in the chloroplast. Functionally, involved in the disassembling mechanism of the intact light-harvesting complex of photosystem II (LHCPII) in the thylakoid membranes. Required to trigger chlorophyll degradation during natural and dark-induced leaf senescence. In Oryza sativa subsp. indica (Rice), this protein is Protein STAY-GREEN, chloroplastic (SGR).